The primary structure comprises 523 residues: Apoptosis inhibitor 5-B (523 aa).

Positions 1-360 are ARM-like and Heat-like helical repeats; the sequence is MPTVEELYRN…HQLGRKLPDF (360 aa). Positions 446–523 are disordered; sequence VQKTDSGQKR…RGNRSRGRIY (78 aa). Positions 454-475 match the Nuclear localization signal motif; it reads KRMSDETSSTSPPKKPVVGPKR. The span at 502–515 shows a compositional bias: gly residues; the sequence is GFQGGRGRGWGGRG.

Belongs to the API5 family. As to quaternary structure, monomer.

The protein localises to the nucleus. Its function is as follows. May be an antiapoptotic factor. The polypeptide is Apoptosis inhibitor 5-B (api5-b) (Xenopus laevis (African clawed frog)).